Reading from the N-terminus, the 422-residue chain is Transcription initiation factor TFIID subunit 15b (422 aa).

Disordered regions lie at residues 1-24 (MAGMYNQDGGGGAPIPSYGGDGYG), 47-94 (YGGR…PNPS), 111-263 (ALAP…DAAT), and 368-422 (MAEK…SRPY). Composition is skewed to gly residues over residues 8 to 24 (DGGGGAPIPSYGGDGYG) and 47 to 83 (YGGRGGYGGGGGRGNRGGGGGGYQGGDRGGRGSGGGG). A RanBP2-type zinc finger spans residues 84–115 (RDGDWRCPNPSCGNVNFARRVECNKCGALAPS). The span at 123 to 133 (DRGGGGYSRGG) shows a compositional bias: gly residues. A compositionally biased stretch (basic and acidic residues) spans 134–156 (GDSDRGGGRGGRNDSGRSYESSR). Composition is skewed to gly residues over residues 219 to 229 (PSYGGPRGGYG) and 236 to 247 (GGRGGRSGGYDG). Over residues 252 to 263 (RRQEASYEDAAT) the composition is skewed to basic and acidic residues. The RRM domain maps to 280 to 371 (ARIYISNLPP…NKISVTMAEK (92 aa)). Residues 382-397 (RGGGRGGGGGGYGGGG) show a composition bias toward gly residues.

Belongs to the TAF15 family. In terms of assembly, component of the TFIID complex. TFIID is composed of TATA binding protein (TBP) and a number of TBP-associated factors (TAFs) whose MWs range from 14-217 kDa. Interacts with TAF4, TAF4B, TAF5, TAF12B and TAF14. In terms of tissue distribution, expressed in roots, leaves and inflorescences.

Its subcellular location is the nucleus. TAFs are components of the transcription factor IID (TFIID) complex that is essential for mediating regulation of RNA polymerase transcription. This chain is Transcription initiation factor TFIID subunit 15b (TAF15B), found in Arabidopsis thaliana (Mouse-ear cress).